The primary structure comprises 499 residues: U4/U6 small nuclear ribonucleoprotein Prp31 (499 aa).

The segment at 1 to 37 is disordered; sequence MSLADELLADLEEAAEEEEGGSYGEEEEEPAIEDVQE. A compositionally biased stretch (acidic residues) spans 7 to 37; that stretch reads LLADLEEAAEEEEGGSYGEEEEEPAIEDVQE. Coiled-coil stretches lie at residues 85-120 and 181-215; these read EAAPEYRVIVDANNLTVEIENELNIIHKFIRDKYSK and EEELERLEEACDMALELNASKHRIYEYVESRMSFI. In terms of domain architecture, Nop spans 215–333; it reads IAPNLSIIIG…IERKFDKWQE (119 aa). Positions 334-357 are disordered; the sequence is PPPVKQVKPLPAPLDGQRKKRGGR. Positions 351–364 match the Nuclear localization signal (NLS) motif; sequence RKKRGGRRYRKMKE. Serine 379, serine 395, and serine 432 each carry phosphoserine. Position 438 is an N6-acetyllysine (lysine 438). Serine 439 carries the phosphoserine modification. Threonine 440 is subject to Phosphothreonine. At serine 450 the chain carries Phosphoserine. Threonine 455 is subject to Phosphothreonine. Glycyl lysine isopeptide (Lys-Gly) (interchain with G-Cter in SUMO2) cross-links involve residues lysine 471 and lysine 478.

This sequence belongs to the PRP31 family. As to quaternary structure, identified in the spliceosome B complex. Component of the U4/U6-U5 tri-snRNP complex composed of the U4, U6 and U5 snRNAs and at least PRPF3, PRPF4, PRPF6, PRPF8, PRPF31, SNRNP200, TXNL4A, SNRNP40, DDX23, CD2BP2, PPIH, SNU13, EFTUD2, SART1 and USP39. Interacts with a complex formed by SNU13 and U4 snRNA, but not with SNU13 or U4 snRNA alone. The complex formed by SNU13 and PRPF31 also binds U4atac snRNA, a characteristic component of specific, less abundant spliceosomal complexes. Interacts with PRPF6/U5 snRNP-associated 102 kDa protein. Component of some MLL1/MLL complex, at least composed of the core components KMT2A/MLL1, ASH2L, HCFC1/HCF1, WDR5 and RBBP5, as well as the facultative components BACC1, CHD8, E2F6, HSP70, INO80C, KANSL1, LAS1L, MAX, MCRS1, MGA, KAT8/MOF, PELP1, PHF20, PRP31, RING2, RUVB1/TIP49A, RUVB2/TIP49B, SENP3, TAF1, TAF4, TAF6, TAF7, TAF9 and TEX10. Interacts (via its NLS) with CTNNBL1. Interacts with USH1G. Phosphorylated by PRP4K during spliceosome assembly. In terms of tissue distribution, ubiquitously expressed.

Its subcellular location is the nucleus. It localises to the nucleus speckle. The protein localises to the cajal body. In terms of biological role, involved in pre-mRNA splicing as component of the spliceosome. Required for the assembly of the U4/U5/U6 tri-snRNP complex, one of the building blocks of the spliceosome. This Homo sapiens (Human) protein is U4/U6 small nuclear ribonucleoprotein Prp31.